The chain runs to 338 residues: Holliday junction branch migration complex subunit RuvB (338 aa).

A compositionally biased stretch (basic and acidic residues) spans 1–14; that stretch reads MENDHGILSDHPSG. A disordered region spans residues 1 to 21; that stretch reads MENDHGILSDHPSGEEESQVE. A large ATPase domain (RuvB-L) region spans residues 3–185; it reads NDHGILSDHP…FGIVEHMNYY (183 aa). Residues Leu24, Arg25, Gly66, Lys69, Thr70, Thr71, 132–134, Arg175, Tyr185, and Arg222 each bind ATP; that span reads EDY. Thr70 lines the Mg(2+) pocket. The interval 186–256 is small ATPAse domain (RuvB-S); it reads TQDELTKIIF…IVKQALSLLQ (71 aa). A head domain (RuvB-H) region spans residues 259-338; it reads DRGLDEIDRK…LGIEYPTDKN (80 aa). Arg314 and Arg319 together coordinate DNA.

This sequence belongs to the RuvB family. In terms of assembly, homohexamer. Forms an RuvA(8)-RuvB(12)-Holliday junction (HJ) complex. HJ DNA is sandwiched between 2 RuvA tetramers; dsDNA enters through RuvA and exits via RuvB. An RuvB hexamer assembles on each DNA strand where it exits the tetramer. Each RuvB hexamer is contacted by two RuvA subunits (via domain III) on 2 adjacent RuvB subunits; this complex drives branch migration. In the full resolvosome a probable DNA-RuvA(4)-RuvB(12)-RuvC(2) complex forms which resolves the HJ.

Its subcellular location is the cytoplasm. It catalyses the reaction ATP + H2O = ADP + phosphate + H(+). In terms of biological role, the RuvA-RuvB-RuvC complex processes Holliday junction (HJ) DNA during genetic recombination and DNA repair, while the RuvA-RuvB complex plays an important role in the rescue of blocked DNA replication forks via replication fork reversal (RFR). RuvA specifically binds to HJ cruciform DNA, conferring on it an open structure. The RuvB hexamer acts as an ATP-dependent pump, pulling dsDNA into and through the RuvAB complex. RuvB forms 2 homohexamers on either side of HJ DNA bound by 1 or 2 RuvA tetramers; 4 subunits per hexamer contact DNA at a time. Coordinated motions by a converter formed by DNA-disengaged RuvB subunits stimulates ATP hydrolysis and nucleotide exchange. Immobilization of the converter enables RuvB to convert the ATP-contained energy into a lever motion, pulling 2 nucleotides of DNA out of the RuvA tetramer per ATP hydrolyzed, thus driving DNA branch migration. The RuvB motors rotate together with the DNA substrate, which together with the progressing nucleotide cycle form the mechanistic basis for DNA recombination by continuous HJ branch migration. Branch migration allows RuvC to scan DNA until it finds its consensus sequence, where it cleaves and resolves cruciform DNA. In Limosilactobacillus reuteri (strain DSM 20016) (Lactobacillus reuteri), this protein is Holliday junction branch migration complex subunit RuvB.